Reading from the N-terminus, the 310-residue chain is Glutaminase (310 aa).

Residues serine 67, asparagine 118, glutamate 161, asparagine 168, tyrosine 192, tyrosine 244, and valine 262 each contribute to the substrate site.

It belongs to the glutaminase family. In terms of assembly, homotetramer.

It carries out the reaction L-glutamine + H2O = L-glutamate + NH4(+). This chain is Glutaminase, found in Legionella pneumophila (strain Paris).